Reading from the N-terminus, the 306-residue chain is D-alanine--D-alanine ligase (306 aa).

In terms of domain architecture, ATP-grasp spans 101-303; the sequence is KLVWQALGLP…FSQLVARILM (203 aa). 134 to 189 provides a ligand contact to ATP; it reads VAKLGLPLIVKPSHEGSSVGMSKVDHASELQKALVEAFQHDSDVLIEKWLSGPEFT. Residues D257, E270, and N272 each coordinate Mg(2+).

It belongs to the D-alanine--D-alanine ligase family. The cofactor is Mg(2+). Mn(2+) is required as a cofactor.

It localises to the cytoplasm. It catalyses the reaction 2 D-alanine + ATP = D-alanyl-D-alanine + ADP + phosphate + H(+). The protein operates within cell wall biogenesis; peptidoglycan biosynthesis. Functionally, cell wall formation. The polypeptide is D-alanine--D-alanine ligase (Yersinia pseudotuberculosis serotype O:1b (strain IP 31758)).